The chain runs to 61 residues: DNA-directed RNA polymerase subunit Rpo6 (61 aa).

The protein belongs to the archaeal Rpo6/eukaryotic RPB6 RNA polymerase subunit family. In terms of assembly, part of the RNA polymerase complex.

It is found in the cytoplasm. The enzyme catalyses RNA(n) + a ribonucleoside 5'-triphosphate = RNA(n+1) + diphosphate. In terms of biological role, DNA-dependent RNA polymerase (RNAP) catalyzes the transcription of DNA into RNA using the four ribonucleoside triphosphates as substrates. The sequence is that of DNA-directed RNA polymerase subunit Rpo6 from Methanothermobacter thermautotrophicus (strain ATCC 29096 / DSM 1053 / JCM 10044 / NBRC 100330 / Delta H) (Methanobacterium thermoautotrophicum).